Reading from the N-terminus, the 318-residue chain is Cytochrome f (318 aa).

A signal peptide spans 1–34 (MKNNYLANLIKTLQAIVVSVALLAPLVLPSAVNA). Heme contacts are provided by Phe35, Cys55, Cys58, and His59. The helical transmembrane segment at 284–304 (VKGLIAFFFTVILAQILLVLK) threads the bilayer.

This sequence belongs to the cytochrome f family. In terms of assembly, the 4 large subunits of the cytochrome b6-f complex are cytochrome b6, subunit IV (17 kDa polypeptide, petD), cytochrome f and the Rieske protein, while the 4 small subunits are PetG, PetL, PetM and PetN. The complex functions as a dimer. The cofactor is heme.

It localises to the plastid. Its subcellular location is the chloroplast thylakoid membrane. Functionally, component of the cytochrome b6-f complex, which mediates electron transfer between photosystem II (PSII) and photosystem I (PSI), cyclic electron flow around PSI, and state transitions. The protein is Cytochrome f of Rhodomonas salina (Cryptomonas salina).